The following is a 710-amino-acid chain: MLDGPLFSEGPDSPRELQDEESGSCLWVQKSKLLVIEVKTISCHYSRRAPSRQSMDIQASYWARGPQSRTCRLRPGSPEPPPRRPWASRVLQEATNWRAGPPAEVRAREQEKRKAASQEREAKETERKRRKAGGARRSPLGQPRPEPRNALRAAQPTGFPVFSRPERFGQVGRAPRPSVLPQGDPGVAWAGPWGGRRPGPPSYEAHLLLRGSAGTAPRRRWDRPPPYVAPPSYEGPHRTLGTKRGPELSRAPTSSAPVPATTRTEGGRTKKRLDPRIYRDVLGAWGLRQGRGLLGGAPGCTAARARPESCKGAIEKSSGLVAAGLNSAGDSHSQGKTTGGPGTDAALSRSAISSPPRPVPRSRQHLRGSRKGKEGSEQIWLPTCWLASPKKPPVRHSQTLPRPWAPGGTGWKESLGQREGAEHETLEVWKVTRRAHTLPRISRGPAGREGIFVIDATCVVIKSQYVPTPRTQQGQLVPSGESCSVSDSLSQPKPCHEEEGEGAAANPSVCQKRLLSSRVLNQPSEGRECEAEVGQQGDSSLEERSSSGLGFPVGEVNPRDAPTQPGSQEHPTLGPAAPVCAGSLKGSEAAGVPRRAGGGWARTPGPYAGALREAVSRIRRHTAPDSDSDEAEDLSVHSGSSDGSDTDAPGASWRNERTLPALGNTRPREGGKTAGLSDSIREIVDVISQTEEGFIREDTRKTPQGNRERE.

4 disordered regions span residues 1–22, 62–195, 213–274, and 324–375; these read MLDGPLFSEGPDSPRELQDEES, WARG…PWGG, AGTA…KRLD, and GLNS…GKEG. The stretch at 103-134 forms a coiled coil; that stretch reads AEVRAREQEKRKAASQEREAKETERKRRKAGG. Residues 105 to 127 show a composition bias toward basic and acidic residues; it reads VRAREQEKRKAASQEREAKETER. The segment at 113–131 is nuclear localization; the sequence is RKAASQEREAKETERKRRK. The interval 186–236 is interaction with MAGI2; the sequence is GVAWAGPWGGRRPGPPSYEAHLLLRGSAGTAPRRRWDRPPPYVAPPSYEGP. The span at 265–274 shows a compositional bias: basic and acidic residues; the sequence is EGGRTKKRLD. An interaction with ACTN1 region spans residues 341 to 435; sequence PGTDAALSRS…LEVWKVTRRA (95 aa). Over residues 360-370 the composition is skewed to basic residues; the sequence is PRSRQHLRGSR. S388 carries the phosphoserine modification. Disordered regions lie at residues 390–422, 469–508, and 521–710; these read KKPPVRHSQTLPRPWAPGGTGWKESLGQREGAE, PRTQQGQLVPSGESCSVSDSLSQPKPCHEEEGEGAAANPS, and NQPS…RERE. Residues 407 to 708 are interaction with CD2AP and NPHS1; sequence GGTGWKESLG…TRKTPQGNRE (302 aa). Residues 469-491 are compositionally biased toward polar residues; the sequence is PRTQQGQLVPSGESCSVSDSLSQ. Residues 693 to 710 show a composition bias toward basic and acidic residues; that stretch reads GFIREDTRKTPQGNRERE.

In terms of assembly, forms a ternary complex with MAGI2 and SH3KBP1; recruits DDN to the cytoplasm. Interacts with MAGI1. Interacts with ACTN1 and may interact with WWC1. Interacts with the podocyte slit diaphragm proteins CD2AP, NPHS1 and NPHS2; the interaction with CD2AP and NPHS1 is direct. As to expression, two forms of 81 kDa and 89 kDa are expressed in brain. The 81 kDa form is the only one found in kidney podocytes.

The protein localises to the cell projection. The protein resides in the dendritic spine membrane. Its subcellular location is the cytoplasm. It localises to the endoplasmic reticulum membrane. It is found in the perikaryon. The protein localises to the nucleus. Functionally, promotes apoptosis of kidney glomerular podocytes. Podocytes are highly specialized cells essential to the ultrafiltration of blood, resulting in the extraction of urine and the retention of protein. The polypeptide is Dendrin (Ddn) (Mus musculus (Mouse)).